The sequence spans 383 residues: S-adenosylmethionine synthase (383 aa).

Residue histidine 15 participates in ATP binding. Aspartate 17 provides a ligand contact to Mg(2+). Glutamate 43 contacts K(+). Positions 56 and 99 each coordinate L-methionine. The tract at residues 99–109 (QSQDINQGVDR) is flexible loop. Residues 164 to 166 (DAK), 230 to 231 (RF), aspartate 239, 245 to 246 (RK), alanine 262, and lysine 266 contribute to the ATP site. Aspartate 239 is an L-methionine binding site. Lysine 270 provides a ligand contact to L-methionine.

It belongs to the AdoMet synthase family. Homotetramer; dimer of dimers. Mg(2+) is required as a cofactor. Requires K(+) as cofactor.

The protein localises to the cytoplasm. The enzyme catalyses L-methionine + ATP + H2O = S-adenosyl-L-methionine + phosphate + diphosphate. It participates in amino-acid biosynthesis; S-adenosyl-L-methionine biosynthesis; S-adenosyl-L-methionine from L-methionine: step 1/1. In terms of biological role, catalyzes the formation of S-adenosylmethionine (AdoMet) from methionine and ATP. The overall synthetic reaction is composed of two sequential steps, AdoMet formation and the subsequent tripolyphosphate hydrolysis which occurs prior to release of AdoMet from the enzyme. The polypeptide is S-adenosylmethionine synthase (Actinobacillus succinogenes (strain ATCC 55618 / DSM 22257 / CCUG 43843 / 130Z)).